A 331-amino-acid polypeptide reads, in one-letter code: POU domain, class 4, transcription factor 3 (331 aa).

Residues 81-97 show a composition bias toward low complexity; that stretch reads TSSSSTVPISHPSSNLP. A disordered region spans residues 81-108; it reads TSSSSTVPISHPSSNLPSHHHHHLSHQT. One can recognise a POU-specific domain in the interval 172–249; it reads DVESDPRELE…VLQAWLEEAE (78 aa). The segment at residues 267 to 326 is a DNA-binding region (homeobox); the sequence is RKRKRTSIAAPEKRSLEAYFAIQPRPSSEKIAAIAEKLDLKKNVVRVWFCNQRQKQKRMK.

Belongs to the POU transcription factor family. Class-4 subfamily. Interaction with ISL1. In terms of tissue distribution, expressed in the nervous system. Expressed in the otic vesicle during embryogenesis. Expressed in the adult retina in a subset of retinal ganglion cells (RGCs), and at a lower level in the adult tectum. Not expressed in the adult olfactory bulb.

The protein resides in the nucleus. It localises to the cytoplasm. Acts as a transcriptional activator. Acts by binding to sequences related to the consensus octamer motif 5'-ATGCAAAT-3' in the regulatory regions of its target genes. May play a role in specifying terminally differentiated neuronal phenotypes. The polypeptide is POU domain, class 4, transcription factor 3 (pou4f3) (Danio rerio (Zebrafish)).